A 212-amino-acid chain; its full sequence is Uridine kinase (212 aa).

12 to 19 (GGSGGGKT) serves as a coordination point for ATP.

Belongs to the uridine kinase family.

It is found in the cytoplasm. The catalysed reaction is uridine + ATP = UMP + ADP + H(+). The enzyme catalyses cytidine + ATP = CMP + ADP + H(+). The protein operates within pyrimidine metabolism; CTP biosynthesis via salvage pathway; CTP from cytidine: step 1/3. Its pathway is pyrimidine metabolism; UMP biosynthesis via salvage pathway; UMP from uridine: step 1/1. The protein is Uridine kinase of Streptococcus pneumoniae serotype 19F (strain G54).